The sequence spans 32 residues: Photosystem II reaction center protein T (32 aa).

Position 1 is an N-formylmethionine (Met1). Residues 1–2 (ME) are Lumenal-facing. The chain crosses the membrane as a helical span at residues 3–23 (TITYVFIFACIIALFFFAIFF). Topologically, residues 24 to 32 (REPPRITKK) are cytoplasmic.

The protein belongs to the PsbT family. As to quaternary structure, PSII is composed of 1 copy each of membrane proteins PsbA, PsbB, PsbC, PsbD, PsbE, PsbF, PsbH, PsbI, PsbJ, PsbK, PsbL, PsbM, PsbT, PsbX, PsbY, PsbZ, Psb30/Ycf12, PsbO, CyanoQ (PsbQ), PsbU, PsbV and a large number of cofactors. It forms dimeric complexes. Part of a photosystem II (PSII) assembly intermediate complex PSII-I; crystallized from a strain deleted of psbJ, it forms monomeric PSII before addition of the oxygen evolving complex. PSII-I includes 3 assembly factors not found in mature PSII (Psb27, Psb28 and Psb34). PSII binds multiple chlorophylls, carotenoids and specific lipids. is required as a cofactor.

Its subcellular location is the cellular thylakoid membrane. Found at the monomer-monomer interface of the photosystem II (PS II) dimer, plays a role in assembly and dimerization of PSII. PSII is a light-driven water plastoquinone oxidoreductase, using light energy to abstract electrons from H(2)O, generating a proton gradient subsequently used for ATP formation. The chain is Photosystem II reaction center protein T from Thermosynechococcus vestitus (strain NIES-2133 / IAM M-273 / BP-1).